A 146-amino-acid polypeptide reads, in one-letter code: VEWTDFERATIKDIFSKIEYEVVGPAALARCLVVYPWTQRYFGKFGNLYNAEAITGNPMISKHGTTILHGLDRAVKNMDDIKNTYAELSVLHSETLHVDPDNFKLLSDCLTIVVAGQLGKDFTGEVQAAFQKFLAVVVSSLGRQYH.

The 145-residue stretch at 2–146 folds into the Globin domain; that stretch reads EWTDFERATI…VVSSLGRQYH (145 aa). Heme b-binding residues include His63 and His92.

The protein belongs to the globin family. Hb2 is a heterotetramer of two alpha chains and two beta-2 chains. In terms of tissue distribution, red blood cells.

Its function is as follows. Involved in oxygen transport from gills to the various peripheral tissues. This is Hemoglobin subunit beta-2 (hbb2) from Pseudaphritis urvillii (Congolli).